The chain runs to 149 residues: D-aminoacyl-tRNA deacylase (149 aa).

The Gly-cisPro motif, important for rejection of L-amino acids motif lies at 137 to 138; sequence GP.

It belongs to the DTD family. In terms of assembly, homodimer.

Its subcellular location is the cytoplasm. The catalysed reaction is glycyl-tRNA(Ala) + H2O = tRNA(Ala) + glycine + H(+). It catalyses the reaction a D-aminoacyl-tRNA + H2O = a tRNA + a D-alpha-amino acid + H(+). Functionally, an aminoacyl-tRNA editing enzyme that deacylates mischarged D-aminoacyl-tRNAs. Also deacylates mischarged glycyl-tRNA(Ala), protecting cells against glycine mischarging by AlaRS. Acts via tRNA-based rather than protein-based catalysis; rejects L-amino acids rather than detecting D-amino acids in the active site. By recycling D-aminoacyl-tRNA to D-amino acids and free tRNA molecules, this enzyme counteracts the toxicity associated with the formation of D-aminoacyl-tRNA entities in vivo and helps enforce protein L-homochirality. The polypeptide is D-aminoacyl-tRNA deacylase (Syntrophus aciditrophicus (strain SB)).